Here is a 109-residue protein sequence, read N- to C-terminus: Major allergen I polypeptide chain 2 (109 aa).

Positions 1-17 are cleaved as a signal peptide; it reads MRGALLVLALLVTQALG. N50 carries N-linked (GlcNAc...) asparagine glycosylation.

The protein belongs to the secretoglobin family. As to quaternary structure, heterotetramer composed of two non-covalently linked disulfide-linked heterodimer of chains 1 and 2. As to expression, the long form is preferentially expressed in the salivary gland, while the short form is preferentially expressed in the skin.

It is found in the secreted. The protein is Major allergen I polypeptide chain 2 (CH2) of Felis catus (Cat).